A 644-amino-acid polypeptide reads, in one-letter code: Large subunit GTPase 1 homolog (644 aa).

Residues 1–31 form a disordered region; it reads MGRRRAPGGGSLGRVLIRQQTQRSRSHRHTD. Phosphoserine occurs at positions 93 and 97. The region spanning 164-430 is the CP-type G domain; that stretch reads WRQLWRVIER…LCDCPGLVMP (267 aa). Residue 212–215 coordinates GTP; sequence NKAD. The segment at 253–345 is disordered; the sequence is KEEVDSVAGD…KNAENQQVNN (93 aa). Positions 302–326 are enriched in acidic residues; that stretch reads CQEDEEEDWQTCSEEDSVPEEEEGC. GTP-binding positions include 379–386 and 423–426; these read GYPNVGKS and DCPG. The tract at residues 618–644 is disordered; sequence VPGKPWKKHGNRNKKEKSRRLYKHLDV. The segment covering 622–644 has biased composition (basic residues); that stretch reads PWKKHGNRNKKEKSRRLYKHLDV.

The protein belongs to the TRAFAC class YlqF/YawG GTPase family. LSG1 subfamily.

It localises to the cytoplasm. The protein resides in the endoplasmic reticulum. Its subcellular location is the nucleus. It is found in the cajal body. The enzyme catalyses GTP + H2O = GDP + phosphate + H(+). Functions as a GTPase. May act by mediating the release of NMD3 from the 60S ribosomal subunit after export into the cytoplasm during the 60S ribosomal subunit maturation. This Mus musculus (Mouse) protein is Large subunit GTPase 1 homolog.